An 84-amino-acid chain; its full sequence is Putative membrane protein insertion efficiency factor (84 aa).

Positions 63–84 (WGGSGYDPVPGADPEHDRRPRG) are disordered. Basic and acidic residues predominate over residues 75–84 (DPEHDRRPRG).

It belongs to the UPF0161 family.

It is found in the cell inner membrane. Functionally, could be involved in insertion of integral membrane proteins into the membrane. The sequence is that of Putative membrane protein insertion efficiency factor from Cereibacter sphaeroides (strain ATCC 17029 / ATH 2.4.9) (Rhodobacter sphaeroides).